Reading from the N-terminus, the 1372-residue chain is DNA-directed RNA polymerase subunit beta (1372 aa).

This sequence belongs to the RNA polymerase beta chain family. The RNAP catalytic core consists of 2 alpha, 1 beta, 1 beta' and 1 omega subunit. When a sigma factor is associated with the core the holoenzyme is formed, which can initiate transcription.

It catalyses the reaction RNA(n) + a ribonucleoside 5'-triphosphate = RNA(n+1) + diphosphate. In terms of biological role, DNA-dependent RNA polymerase catalyzes the transcription of DNA into RNA using the four ribonucleoside triphosphates as substrates. This Psychrobacter arcticus (strain DSM 17307 / VKM B-2377 / 273-4) protein is DNA-directed RNA polymerase subunit beta.